Reading from the N-terminus, the 409-residue chain is MSDNSPITSITAASLQPELWTSSSNDALQIYITDSDGTALNFHPNFTYPIFGDSEQIFGYRDLVIFLCFDHCTFYPFLNVKYSDKLNDDTLEDPREKLLSYLPESTIFKDEVKWVDSINKEKEGFEIPGELVGNIFTHGDDKFGIYKLDLKNAQGLELHKRLQILVLLFIEAGSYIDHQDELWDIYVMYKVTDEKTPSIIGFCTAYNYWKYGGFEKFDSNQQEVRKKISQFIVLPMYQGLKLGGRFYNKLYEYWMQDPRVIEVVVEDPSESFDDLRDRCDLTRLCQNTIKVASVDLPLINTEWATKLRQEQKLEKRQFSRLLEMILIYQLEHNLTNITKKQVRLFIKKRLYEKNKEILDGLDEPTRLDKLQTAYASLESDYKRILSGLSLHKRALDSTEGSSKKSKPNV.

Interaction with histone H4 N-terminus stretches follow at residues 53 to 55 (DSE) and 206 to 208 (YNY). Acetyl-CoA is bound by residues 231–233 (FIV) and 238–244 (QGLKLGG). E266 (proton donor/acceptor) is an active-site residue.

Belongs to the HAT1 family. In terms of assembly, component of the HAT-B complex composed of at least HAT1 and HAT2. The HAT-B complex binds to histone H4 tail.

The protein localises to the cytoplasm. It localises to the nucleus. It catalyses the reaction L-lysyl-[protein] + acetyl-CoA = N(6)-acetyl-L-lysyl-[protein] + CoA + H(+). Its function is as follows. Catalytic component of the histone acetylase B (HAT-B) complex. Acetylates 'Lys-12' of histone H4 which is required for telomeric silencing. Has intrinsic substrate specificity that modifies lysine in recognition sequence GXGKXG. Involved in DNA double-strand break repair. This chain is Histone acetyltransferase type B catalytic subunit (HAT1), found in Debaryomyces hansenii (strain ATCC 36239 / CBS 767 / BCRC 21394 / JCM 1990 / NBRC 0083 / IGC 2968) (Yeast).